The primary structure comprises 53 residues: uncharacterized protein (53 aa).

The chain crosses the membrane as a helical span at residues 13-35 (FLLHSFTFPIAHCPSFSWASFFF).

The protein resides in the membrane. This is an uncharacterized protein from Saccharomyces cerevisiae (strain ATCC 204508 / S288c) (Baker's yeast).